The primary structure comprises 640 residues: Threonine--tRNA ligase (640 aa).

Residues 1 to 61 (MPTITLPDGS…ACDADVTIIT (61 aa)) enclose the TGS domain. Residues 243–534 (DHRKIGKALD…LIEQYAGNMP (292 aa)) form a catalytic region. 3 residues coordinate Zn(2+): Cys-334, His-385, and His-511.

This sequence belongs to the class-II aminoacyl-tRNA synthetase family. As to quaternary structure, homodimer. Requires Zn(2+) as cofactor.

Its subcellular location is the cytoplasm. The enzyme catalyses tRNA(Thr) + L-threonine + ATP = L-threonyl-tRNA(Thr) + AMP + diphosphate + H(+). In terms of biological role, catalyzes the attachment of threonine to tRNA(Thr) in a two-step reaction: L-threonine is first activated by ATP to form Thr-AMP and then transferred to the acceptor end of tRNA(Thr). Also edits incorrectly charged L-seryl-tRNA(Thr). This Dichelobacter nodosus (strain VCS1703A) protein is Threonine--tRNA ligase.